The chain runs to 219 residues: Ribose-5-phosphate isomerase A (219 aa).

Residues 28–31 (TGST), 81–84 (DGAD), and 94–97 (KGGG) each bind substrate. Residue glutamate 103 is the Proton acceptor of the active site. Lysine 121 is a binding site for substrate.

It belongs to the ribose 5-phosphate isomerase family. Homodimer.

It catalyses the reaction aldehydo-D-ribose 5-phosphate = D-ribulose 5-phosphate. It participates in carbohydrate degradation; pentose phosphate pathway; D-ribose 5-phosphate from D-ribulose 5-phosphate (non-oxidative stage): step 1/1. Catalyzes the reversible conversion of ribose-5-phosphate to ribulose 5-phosphate. The polypeptide is Ribose-5-phosphate isomerase A (Methylibium petroleiphilum (strain ATCC BAA-1232 / LMG 22953 / PM1)).